A 428-amino-acid chain; its full sequence is Serine--tRNA ligase (428 aa).

Residue 231 to 233 (TAE) participates in L-serine binding. ATP is bound by residues 262–264 (RRE) and V278. Residue E285 coordinates L-serine. 349 to 352 (EVSS) serves as a coordination point for ATP. An L-serine-binding site is contributed by S384.

Belongs to the class-II aminoacyl-tRNA synthetase family. Type-1 seryl-tRNA synthetase subfamily. In terms of assembly, homodimer. The tRNA molecule binds across the dimer.

It is found in the cytoplasm. The catalysed reaction is tRNA(Ser) + L-serine + ATP = L-seryl-tRNA(Ser) + AMP + diphosphate + H(+). It carries out the reaction tRNA(Sec) + L-serine + ATP = L-seryl-tRNA(Sec) + AMP + diphosphate + H(+). Its pathway is aminoacyl-tRNA biosynthesis; selenocysteinyl-tRNA(Sec) biosynthesis; L-seryl-tRNA(Sec) from L-serine and tRNA(Sec): step 1/1. Functionally, catalyzes the attachment of serine to tRNA(Ser). Is also able to aminoacylate tRNA(Sec) with serine, to form the misacylated tRNA L-seryl-tRNA(Sec), which will be further converted into selenocysteinyl-tRNA(Sec). The sequence is that of Serine--tRNA ligase from Chlamydia trachomatis serovar A (strain ATCC VR-571B / DSM 19440 / HAR-13).